Reading from the N-terminus, the 383-residue chain is BRISC and BRCA1-A complex member 2 (383 aa).

N-acetylmethionine is present on Met-1. At Ser-2 the chain carries Phosphoserine. 2 UEV-like regions span residues 30–147 (DATN…TLLE) and 275–364 (IAAF…RAKA).

The protein belongs to the BABAM2 family. As to quaternary structure, component of the ARISC complex, at least composed of UIMC1/RAP80, ABRAXAS1, BRCC3/BRCC36, BABAM2 and BABAM1/NBA1. Component of the BRCA1-A complex, at least composed of BRCA1, BARD1, UIMC1/RAP80, ABRAXAS1, BRCC3/BRCC36, BABAM2 and BABAM1/NBA1. In the BRCA1-A complex, interacts directly with ABRAXAS1, BRCC3/BRCC36 and BABAM1/NBA1. Binds polyubiquitin. Component of the BRISC complex, at least composed of ABRAXAS2, BRCC3/BRCC36, BABAM2 and BABAM1/NBA1. Identified in a complex with SHMT2 and the other subunits of the BRISC complex. Component of the BRCA1/BRCA2 containing complex (BRCC), which also contains BRCA1, BRCA2, BARD1, BRCC3/BRCC36 and RAD51. BRCC is a ubiquitin E3 ligase complex that enhances cellular survival following DNA damage. May interact with FAS and TNFRSF1A. In terms of tissue distribution, expressed in brain, heart, kidney, liver, lung, testis, germinal center B-cells and various mouse cell lines.

It localises to the cytoplasm. Its subcellular location is the nucleus. Functionally, component of the BRCA1-A complex, a complex that specifically recognizes 'Lys-63'-linked ubiquitinated histones H2A and H2AX at DNA lesions sites, leading to target the BRCA1-BARD1 heterodimer to sites of DNA damage at double-strand breaks (DSBs). The BRCA1-A complex also possesses deubiquitinase activity that specifically removes 'Lys-63'-linked ubiquitin on histones H2A and H2AX. In the BRCA1-A complex, it acts as an adapter that bridges the interaction between BABAM1/NBA1 and the rest of the complex, thereby being required for the complex integrity and modulating the E3 ubiquitin ligase activity of the BRCA1-BARD1 heterodimer. Probably also plays a role as a component of the BRISC complex, a multiprotein complex that specifically cleaves 'Lys-63'-linked ubiquitin. May regulate TNF-alpha signaling through its interactions with TNFRSF1A. Its function is as follows. Component of the BRCA1-A complex, a complex that specifically recognizes 'Lys-63'-linked ubiquitinated histones H2A and H2AX at DNA lesions sites, leading to target the BRCA1-BARD1 heterodimer to sites of DNA damage at double-strand breaks (DSBs). The BRCA1-A complex also possesses deubiquitinase activity that specifically removes 'Lys-63'-linked ubiquitin on histones H2A and H2AX. In the BRCA1-A complex, it acts as an adapter that bridges the interaction between BABAM1/NBA1 and the rest of the complex, thereby being required for the complex integrity and modulating the E3 ubiquitin ligase activity of the BRCA1-BARD1 heterodimer. Component of the BRISC complex, a multiprotein complex that specifically cleaves 'Lys-63'-linked ubiquitin in various substrates. Within the BRISC complex, acts as an adapter that bridges the interaction between BABAM1/NBA1 and the rest of the complex, thereby being required for the complex integrity. The BRISC complex is required for normal mitotic spindle assembly and microtubule attachment to kinetochores via its role in deubiquitinating NUMA1. The BRISC complex plays a role in interferon signaling via its role in the deubiquitination of the interferon receptor IFNAR1; deubiquitination increases IFNAR1 activity by enhancing its stability and cell surface expression. Down-regulates the response to bacterial lipopolysaccharide (LPS) via its role in IFNAR1 deubiquitination. May play a role in homeostasis or cellular differentiation in cells of neural, epithelial and germline origins. May also act as a death receptor-associated anti-apoptotic protein, which inhibits the mitochondrial apoptotic pathway. May regulate TNF-alpha signaling through its interactions with TNFRSF1A; however these effects may be indirect. This is BRISC and BRCA1-A complex member 2 (Babam2) from Mus musculus (Mouse).